The primary structure comprises 271 residues: GPN-loop GTPase 3 (271 aa).

13–18 (GAGKST) provides a ligand contact to GTP. The short motif at 70–72 (GPN) is the Gly-Pro-Asn (GPN)-loop; involved in dimer interface element. 173-176 (SKLD) is a GTP binding site.

The protein belongs to the GPN-loop GTPase family. Heterodimers with GPN1 or GPN2. Binds to RNA polymerase II (RNAPII).

Functionally, small GTPase required for proper nuclear import of RNA polymerase II and III (RNAPII and RNAPIII). May act at an RNAP assembly step prior to nuclear import. This is GPN-loop GTPase 3 from Kluyveromyces lactis (strain ATCC 8585 / CBS 2359 / DSM 70799 / NBRC 1267 / NRRL Y-1140 / WM37) (Yeast).